Reading from the N-terminus, the 215-residue chain is 3-demethoxyubiquinol 3-hydroxylase (215 aa).

E64, E94, H97, E146, E178, and H181 together coordinate Fe cation.

It belongs to the COQ7 family. It depends on Fe cation as a cofactor.

It is found in the cell membrane. The enzyme catalyses a 5-methoxy-2-methyl-3-(all-trans-polyprenyl)benzene-1,4-diol + AH2 + O2 = a 3-demethylubiquinol + A + H2O. It participates in cofactor biosynthesis; ubiquinone biosynthesis. Its function is as follows. Catalyzes the hydroxylation of 2-nonaprenyl-3-methyl-6-methoxy-1,4-benzoquinol during ubiquinone biosynthesis. The chain is 3-demethoxyubiquinol 3-hydroxylase from Pseudomonas putida (strain W619).